The chain runs to 346 residues: Phosphoribosylformylglycinamidine cyclo-ligase (346 aa).

Belongs to the AIR synthase family.

The protein resides in the cytoplasm. The catalysed reaction is 2-formamido-N(1)-(5-O-phospho-beta-D-ribosyl)acetamidine + ATP = 5-amino-1-(5-phospho-beta-D-ribosyl)imidazole + ADP + phosphate + H(+). It functions in the pathway purine metabolism; IMP biosynthesis via de novo pathway; 5-amino-1-(5-phospho-D-ribosyl)imidazole from N(2)-formyl-N(1)-(5-phospho-D-ribosyl)glycinamide: step 2/2. The chain is Phosphoribosylformylglycinamidine cyclo-ligase from Proteus mirabilis (strain HI4320).